We begin with the raw amino-acid sequence, 166 residues long: 3-isopropylmalate dehydratase small subunit (166 aa).

The protein belongs to the LeuD family. LeuD type 2 subfamily. In terms of assembly, heterodimer of LeuC and LeuD.

It carries out the reaction (2R,3S)-3-isopropylmalate = (2S)-2-isopropylmalate. It participates in amino-acid biosynthesis; L-leucine biosynthesis; L-leucine from 3-methyl-2-oxobutanoate: step 2/4. In terms of biological role, catalyzes the isomerization between 2-isopropylmalate and 3-isopropylmalate, via the formation of 2-isopropylmaleate. The sequence is that of 3-isopropylmalate dehydratase small subunit from Caldicellulosiruptor bescii (strain ATCC BAA-1888 / DSM 6725 / KCTC 15123 / Z-1320) (Anaerocellum thermophilum).